The primary structure comprises 1024 residues: MTMITDSLAVVLQRRDWENPGVTQLNRLAAHPPFASWRNSEEARTDRPSQQLRSLNGEWRFAWFPAPEAVPESWLECDLPDADTVVVPSNWQMHGYDAPIYTNVTYPITVNPPFVPAENPTGCYSLTFNIDESWLQEGQTRIIFDGVNSAFHLWCNGRWVGYGQDSRLPSEFDLSAFLHAGENRLAVMVLRWSDGSYLEDQDMWRMSGIFRDVSLLHKPTTQISDFQVTTRFNDDFSRAVLEAEVQMYGELRDELRVTVSLWQGETQVASGTAPFGGEIIDERGGYADRVTLRLNVENPELWSAEIPNLYRAVVELHTADGTLIEAEACDVGFREVRIENGLLLLNGKPLLIRGVNRHEHHPLHGQVMDEQTMVQDILLMKQNNFNAVRCSHYPNHPLWYTLCDRYGLYVVDEANIETHGMVPMNRLTDDPRWLPAMSERVTRMVQRDRNHPSVIIWSLGNESGHGANHDALYRWIKSVDPSRPVQYEGGGADTTATDIICPMYARVDEDQPFPAVPKWSIKKWLSLPGEMRPLILCEYAHAMGNSLGGFAKYWQAFRQYPRLQGGFVWDWVDQSLIKYDENGNPWSAYGGDFGDTPNDRQFCMNGLVFADRTPHPALTEAKHQQQFFQFRLSGRTIEVTSEYLFRHSDNEFLHWMVALDGKPLASGEVPLDVGPQGKQLIELPELPQPESAGQLWLTVRVVQPNATAWSEAGHISAWQQWRLAENLSVTLPSASHAIPQLTTSGTDFCIELGNKRWQFNRQSGFLSQMWIGDEKQLLTPLRDQFTRAPLDNDIGVSEATRIDPNAWVERWKAAGHYQAEAALLQCTADTLADAVLITTAHAWQHQGKTLFISRKTYRIDGHGEMVINVDVAVASDTPHPARIGLTCQLAQVSERVNWLGLGPQENYPDRLTAACFDRWDLPLSDMYTPYVFPSENGLRCGTRELNYGPHLWRGDFQFNISRYSQQQLMETSHRHLLHAEEGTWLNIDGFHMGIGGDDSWSPSVSAEFQLSAGRYHYQLVWCQK.

Substrate contacts are provided by Asn103 and Asp202. A Na(+)-binding site is contributed by Asp202. Positions 417, 419, and 462 each coordinate Mg(2+). Residues Glu462 and Glu538–His541 contribute to the substrate site. Glu462 serves as the catalytic Proton donor. Residue Glu538 is the Nucleophile of the active site. Mg(2+) is bound at residue Asn598. Na(+) contacts are provided by Phe602 and Asn605. Residues Asn605 and Trp1000 each coordinate substrate.

It belongs to the glycosyl hydrolase 2 family. As to quaternary structure, homotetramer. The cofactor is Mg(2+). It depends on Na(+) as a cofactor.

The enzyme catalyses Hydrolysis of terminal non-reducing beta-D-galactose residues in beta-D-galactosides.. This chain is Beta-galactosidase, found in Escherichia coli O1:K1 / APEC.